The following is a 284-amino-acid chain: 3-methyl-2-oxobutanoate hydroxymethyltransferase 2 (284 aa).

Aspartate 49 and aspartate 88 together coordinate Mg(2+). 3-methyl-2-oxobutanoate contacts are provided by residues 49-50 (DS), aspartate 88, and lysine 118. Mg(2+) is bound at residue glutamate 120. Residue glutamate 187 is the Proton acceptor of the active site.

This sequence belongs to the PanB family. As to quaternary structure, homodecamer; pentamer of dimers. It depends on Mg(2+) as a cofactor.

The protein localises to the cytoplasm. The enzyme catalyses 3-methyl-2-oxobutanoate + (6R)-5,10-methylene-5,6,7,8-tetrahydrofolate + H2O = 2-dehydropantoate + (6S)-5,6,7,8-tetrahydrofolate. Its pathway is cofactor biosynthesis; (R)-pantothenate biosynthesis; (R)-pantoate from 3-methyl-2-oxobutanoate: step 1/2. Functionally, catalyzes the reversible reaction in which hydroxymethyl group from 5,10-methylenetetrahydrofolate is transferred onto alpha-ketoisovalerate to form ketopantoate. In Burkholderia ambifaria (strain ATCC BAA-244 / DSM 16087 / CCUG 44356 / LMG 19182 / AMMD) (Burkholderia cepacia (strain AMMD)), this protein is 3-methyl-2-oxobutanoate hydroxymethyltransferase 2.